A 132-amino-acid chain; its full sequence is Ribosome-binding factor A (132 aa).

This sequence belongs to the RbfA family. Monomer. Binds 30S ribosomal subunits, but not 50S ribosomal subunits or 70S ribosomes.

The protein localises to the cytoplasm. One of several proteins that assist in the late maturation steps of the functional core of the 30S ribosomal subunit. Associates with free 30S ribosomal subunits (but not with 30S subunits that are part of 70S ribosomes or polysomes). Required for efficient processing of 16S rRNA. May interact with the 5'-terminal helix region of 16S rRNA. This Caldicellulosiruptor bescii (strain ATCC BAA-1888 / DSM 6725 / KCTC 15123 / Z-1320) (Anaerocellum thermophilum) protein is Ribosome-binding factor A.